The following is a 498-amino-acid chain: ATP synthase subunit beta, chloroplastic (498 aa).

172–179 contributes to the ATP binding site; it reads GGAGVGKT.

It belongs to the ATPase alpha/beta chains family. F-type ATPases have 2 components, CF(1) - the catalytic core - and CF(0) - the membrane proton channel. CF(1) has five subunits: alpha(3), beta(3), gamma(1), delta(1), epsilon(1). CF(0) has four main subunits: a(1), b(1), b'(1) and c(9-12).

It localises to the plastid. The protein resides in the chloroplast thylakoid membrane. It carries out the reaction ATP + H2O + 4 H(+)(in) = ADP + phosphate + 5 H(+)(out). Functionally, produces ATP from ADP in the presence of a proton gradient across the membrane. The catalytic sites are hosted primarily by the beta subunits. The polypeptide is ATP synthase subunit beta, chloroplastic (Galbulimima belgraveana (Northern pigeonberry ash)).